The sequence spans 145 residues: uncharacterized protein (145 aa).

A helical transmembrane segment spans residues 46–66 (FFFLFFLFFFFFFTFQFLVAF).

It localises to the membrane. This is an uncharacterized protein from Saccharomyces cerevisiae (strain ATCC 204508 / S288c) (Baker's yeast).